A 103-amino-acid chain; its full sequence is MYAVFQSGGKQHRVSEGQTVRLEKLDIATGETIEFAEVLMIANGEEVKIGIPFVDGGVIKAEVVAHGRGEKVKIVKFRRRKHYRKQQGHRQWFTDVKITGISA.

This sequence belongs to the bacterial ribosomal protein bL21 family. In terms of assembly, part of the 50S ribosomal subunit. Contacts protein L20.

Its function is as follows. This protein binds to 23S rRNA in the presence of protein L20. This Salmonella paratyphi A (strain ATCC 9150 / SARB42) protein is Large ribosomal subunit protein bL21.